A 130-amino-acid polypeptide reads, in one-letter code: Iron-sulfur cluster insertion protein ErpA (130 aa).

Iron-sulfur cluster is bound by residues C46, C116, and C118.

It belongs to the HesB/IscA family. As to quaternary structure, homodimer. The cofactor is iron-sulfur cluster.

Required for insertion of 4Fe-4S clusters for at least IspG. The polypeptide is Iron-sulfur cluster insertion protein ErpA (Legionella pneumophila subsp. pneumophila (strain Philadelphia 1 / ATCC 33152 / DSM 7513)).